We begin with the raw amino-acid sequence, 185 residues long: MMTPENDEEQTSVFSATVYGDKIQGKNKRKRVIGLCIRISMVISLLSMITMSAFLIVRLNQCMSANEAAITDAAVAVAAASSTHRKVASSTTQYDHKESCNGLYYQGSCYILHSDYQLFSDAKANCTAESSTLPNKSDVLITWLIDYVEDTWGSDGNPITKTTSDYQDSDVSQEVRKYFCVKTMN.

Residues 1 to 33 (MMTPENDEEQTSVFSATVYGDKIQGKNKRKRVI) are Intravirion-facing. The helical transmembrane segment at 34–56 (GLCIRISMVISLLSMITMSAFLI) threads the bilayer. At 57 to 185 (VRLNQCMSAN…RKYFCVKTMN (129 aa)) the chain is on the virion surface side. Residues 98 to 185 (ESCNGLYYQG…RKYFCVKTMN (88 aa)) form a C-type lectin-like domain region. 2 N-linked (GlcNAc...) asparagine; by host glycosylation sites follow: N125 and N135.

This sequence belongs to the orthopoxvirus OPG161 family. Homodimer, disulfide-linked. Interacts with protein OPG190. Interacts (via C-terminus) with protein OPG164. Interacts with OPG162.

It localises to the virion membrane. Its subcellular location is the host membrane. Forms a complex with OPG162 and OPG190 to coordinate the incorporation of OPG164 into wrapped enveloped virion (EV) membranes and, subsequently, the production of actin tails. Therefore plays an essential role in efficient cell-to-cell spread of viral particles. The sequence is that of Protein OPG161 (OPG161) from Homo sapiens (Human).